The sequence spans 1401 residues: Condensin complex subunit 1 (1401 aa).

The interactions with SMC2 and SMC4 stretch occupies residues Met-1–Ser-603. 2 positions are modified to phosphoserine: Ser-20 and Ser-585. Residues Ser-576–Cys-596 show a composition bias toward polar residues. Disordered stretches follow at residues Ser-576 to Asn-611, Arg-956 to Glu-978, and Leu-1303 to Ser-1401. Positions Arg-956 to Thr-971 are enriched in basic and acidic residues. Polar residues predominate over residues Ala-1308–Asp-1336. Residues Ser-1310, Ser-1315, and Ser-1330 each carry the phosphoserine modification. Phosphothreonine is present on Thr-1331. Residue Ser-1333 is modified to Phosphoserine. Thr-1339 carries the phosphothreonine modification. The Bipartite nuclear localization signal motif lies at Pro-1342 to Lys-1362. Residues Thr-1345–Lys-1362 are compositionally biased toward basic residues. Phosphoserine is present on residues Ser-1366, Ser-1367, Ser-1370, Ser-1371, and Ser-1376. The segment covering Glu-1369–Asp-1382 has biased composition (acidic residues). A phosphothreonine; by CDK1 mark is found at Thr-1384 and Thr-1389. Ser-1395 carries the phosphoserine modification.

The protein belongs to the CND1 (condensin subunit 1) family. As to quaternary structure, component of the condensin complex, which contains the SMC2 and SMC4 heterodimer, and three non SMC subunits that probably regulate the complex: NCAPH/BRRN1, NCAPD2/CAPD2 and NCAPG. Interacts with histones H1 and H3. Post-translationally, phosphorylated by CDK1. Its phosphorylation, as well as that of NCAPH and NCAPG subunits, activates the condensin complex and is required for chromosome condensation.

It localises to the nucleus. It is found in the cytoplasm. Its subcellular location is the chromosome. Its function is as follows. Regulatory subunit of the condensin complex, a complex required for conversion of interphase chromatin into mitotic-like condense chromosomes. The condensin complex probably introduces positive supercoils into relaxed DNA in the presence of type I topoisomerases and converts nicked DNA into positive knotted forms in the presence of type II topoisomerases. May target the condensin complex to DNA via its C-terminal domain. May promote the resolution of double-strand DNA catenanes (intertwines) between sister chromatids. Condensin-mediated compaction likely increases tension in catenated sister chromatids, providing directionality for type II topoisomerase-mediated strand exchanges toward chromatid decatenation. Required for decatenation of non-centromeric ultrafine DNA bridges during anaphase. Early in neurogenesis, may play an essential role to ensure accurate mitotic chromosome condensation in neuron stem cells, ultimately affecting neuron pool and cortex size. The sequence is that of Condensin complex subunit 1 from Homo sapiens (Human).